We begin with the raw amino-acid sequence, 270 residues long: F-actin-capping protein subunit beta (270 aa).

This sequence belongs to the F-actin-capping protein beta subunit family. As to quaternary structure, component of the F-actin capping complex, composed of a heterodimer of an alpha and a beta subunit.

It localises to the cytoplasm. It is found in the cytoskeleton. In terms of biological role, F-actin-capping proteins bind in a Ca(2+)-independent manner to the fast growing ends of actin filaments (barbed end) thereby blocking the exchange of subunits at these ends. Unlike other capping proteins (such as gelsolin and severin), these proteins do not sever actin filaments. The polypeptide is F-actin-capping protein subunit beta (cap-2) (Caenorhabditis elegans).